A 286-amino-acid chain; its full sequence is GTP-binding protein 8 (286 aa).

An EngB-type G domain is found at 105-278; sequence KQPEVCFMGR…RCFIAHVTGK (174 aa). GTP contacts are provided by residues 113 to 120, 142 to 146, 160 to 163, 222 to 225, and 257 to 259; these read GRSNVGKS, GHTKK, DMPG, TKID, and VSS. Mg(2+) contacts are provided by Ser120 and Thr144.

The protein belongs to the TRAFAC class TrmE-Era-EngA-EngB-Septin-like GTPase superfamily. EngB GTPase family. It depends on Mg(2+) as a cofactor.

The chain is GTP-binding protein 8 (gtpbp8) from Danio rerio (Zebrafish).